The following is a 383-amino-acid chain: uncharacterized protein (383 aa).

The helical transmembrane segment at 6–26 threads the bilayer; sequence LFLFSCLYFIGGNLKALVLGI. Residues 131–303 form the ATP-grasp domain; the sequence is YKKLKNLGFN…LAMVLLNNKY (173 aa).

The protein localises to the membrane. This is an uncharacterized protein from Methanocaldococcus jannaschii (strain ATCC 43067 / DSM 2661 / JAL-1 / JCM 10045 / NBRC 100440) (Methanococcus jannaschii).